Here is a 195-residue protein sequence, read N- to C-terminus: Granulocyte colony-stimulating factor (195 aa).

The N-terminal stretch at M1–A21 is a signal peptide. Cystine bridges form between C57/C63 and C85/C95. O-linked (GalNAc...) threonine glycosylation is present at T154.

Belongs to the IL-6 superfamily. In terms of assembly, monomer. In terms of processing, O-glycosylated.

The protein resides in the secreted. Granulocyte/macrophage colony-stimulating factors are cytokines that act in hematopoiesis by controlling the production, differentiation, and function of 2 related white cell populations of the blood, the granulocytes and the monocytes-macrophages. This CSF induces granulocytes. The polypeptide is Granulocyte colony-stimulating factor (CSF3) (Bos taurus (Bovine)).